The sequence spans 229 residues: Potassium/proton antiporter CemA (229 aa).

The next 4 membrane-spanning stretches (helical) occupy residues 7-27 (FTPLLYLVSIVFLPWWLSLSF), 114-134 (IICFVILSGFSILGNEELVIL), 154-174 (ILLLTDLCIGFHSPHGWELMV), and 189-209 (IISGLVSTFPVILDTIFKYWI).

It belongs to the CemA family.

The protein localises to the plastid. It is found in the chloroplast inner membrane. The enzyme catalyses K(+)(in) + H(+)(out) = K(+)(out) + H(+)(in). In terms of biological role, contributes to K(+)/H(+) antiport activity by supporting proton efflux to control proton extrusion and homeostasis in chloroplasts in a light-dependent manner to modulate photosynthesis. Prevents excessive induction of non-photochemical quenching (NPQ) under continuous-light conditions. Indirectly promotes efficient inorganic carbon uptake into chloroplasts. The polypeptide is Potassium/proton antiporter CemA (Coffea arabica (Arabian coffee)).